A 955-amino-acid polypeptide reads, in one-letter code: Glutamyl aminopeptidase (955 aa).

Residues 1–17 (MDIEDKTSKMHCMKGKH) lie on the Cytoplasmic side of the membrane. Residues 18-38 (VVIICGVVIAVGLILGLGLGL) traverse the membrane as a helical; Signal-anchor for type II membrane protein segment. At 39-955 (GLDTKACNPP…LENSEHSNFA (917 aa)) the chain is on the extracellular side. N-linked (GlcNAc...) asparagine glycans are attached at residues Asn-118 and Asn-192. Substrate is bound at residue Glu-218. Residues Asn-319 and Asn-335 are each glycosylated (N-linked (GlcNAc...) asparagine). 352-356 (GAMEN) contributes to the substrate binding site. Residue His-388 participates in Zn(2+) binding. The active-site Proton acceptor is Glu-389. Residues His-392 and Glu-411 each coordinate Zn(2+). Residues Asn-458, Asn-547, Asn-584, Asn-592, Asn-674, Asn-759, Asn-823, and Asn-836 are each glycosylated (N-linked (GlcNAc...) asparagine). Substrate is bound at residue Arg-882.

Belongs to the peptidase M1 family. As to quaternary structure, homodimer; disulfide-linked. Zn(2+) serves as cofactor. In terms of processing, N-glycosylated. Glycosylation counts for an increased mass of about 32% of the protein mass (about 48 kDa).

The protein localises to the cell membrane. The catalysed reaction is Release of N-terminal glutamate (and to a lesser extent aspartate) from a peptide.. Its activity is regulated as follows. Substrate specificity is modulated by calcium which enhances the enzymatic activity for cleavage of acidic residues while reducing its activity with neutral and basic residues. Hydrolytic activity is inhibited by the aminopeptidase inhibitor (Leu and acidic inhibitor) amastatin, but not by bestatin (aminopeptidase inhibitor Leu inhibitor), leupeptin, pepstatin A and PMSF. Its hydrolytic activity is also strongly reduced by zinc ions, with a complete inhibition at 0.5 mM, and moderately inhibited by cobalt and copper ions. Functionally, venom protein that cleaves N-terminal acidic residues from peptides with high potency in presence of calcium. It may have several roles in venom including alteration of blood pressure by cleaving circulating angiotensin-2, general degradation of host tissue, increase of permeability to other venom components, and/or processing of other toxins in the venom. The sequence is that of Glutamyl aminopeptidase from Bitis rhinoceros (West African gaboon viper).